The following is a 670-amino-acid chain: Proline-rich receptor-like protein kinase PERK5 (670 aa).

The segment at 1–181 is disordered; the sequence is MADSPVDSSP…SGDSDSSSGN (181 aa). Residues 1–186 lie on the Extracellular side of the membrane; it reads MADSPVDSSP…SSSGNHPQAN (186 aa). A compositionally biased stretch (low complexity) spans 14 to 31; the sequence is TSNGTPPSNGTSPSNESS. N-linked (GlcNAc...) asparagine glycosylation is found at asparagine 22 and asparagine 28. 2 stretches are compositionally biased toward pro residues: residues 32–62 and 84–109; these read PPTP…PAPP and PQTP…PPQT. Residue asparagine 130 is glycosylated (N-linked (GlcNAc...) asparagine). Residues 132 to 141 show a composition bias toward low complexity; it reads TNGGNNNRDG. N-linked (GlcNAc...) asparagine glycosylation is present at asparagine 151. Residues 167-181 are compositionally biased toward low complexity; the sequence is SPPQNSGDSDSSSGN. Residues 187-207 traverse the membrane as a helical segment; that stretch reads IGLIIGVLVGAGLLLLLAVCI. At 208–670 the chain is on the cytoplasmic side; the sequence is CICCNRKKKK…RGSMKRNPQL (463 aa). Threonine 301 carries the post-translational modification Phosphothreonine. Residues 312-590 enclose the Protein kinase domain; it reads FAQSNLLGQG…VRALEGDMSM (279 aa). ATP is bound by residues 318-326 and lysine 340; that span reads LGQGGFGYV. Phosphotyrosine is present on tyrosine 385. Aspartate 436 (proton acceptor) is an active-site residue. Position 469 is a phosphoserine (serine 469). 2 positions are modified to phosphothreonine: threonine 470 and threonine 475. The residue at position 483 (tyrosine 483) is a Phosphotyrosine. Disordered regions lie at residues 589 to 613 and 635 to 670; these read SMDD…VSSE and EYQS…NPQL. Over residues 599-613 the composition is skewed to polar residues; that stretch reads PGQSTYLSPGSVSSE.

This sequence belongs to the protein kinase superfamily. Ser/Thr protein kinase family. As to expression, mostly expressed in flower buds.

Its subcellular location is the cell membrane. The enzyme catalyses L-seryl-[protein] + ATP = O-phospho-L-seryl-[protein] + ADP + H(+). It catalyses the reaction L-threonyl-[protein] + ATP = O-phospho-L-threonyl-[protein] + ADP + H(+). The chain is Proline-rich receptor-like protein kinase PERK5 (PERK5) from Arabidopsis thaliana (Mouse-ear cress).